We begin with the raw amino-acid sequence, 105 residues long: MIKYVLISALLVVAVYSFTIEDNEDALLEEAEDELDTEEERRMALPPGAVCNGHKSDCQCFGAKYECSCPFLWRFRRSAKCHCKKGWAWTAVKKRSCHNRYQWSG.

An N-terminal signal peptide occupies residues 1–17 (MIKYVLISALLVVAVYS). The propeptide occupies 18-41 (FTIEDNEDALLEEAEDELDTEEER). Intrachain disulfides connect cysteine 51–cysteine 67, cysteine 58–cysteine 97, cysteine 60–cysteine 83, and cysteine 69–cysteine 81.

This sequence belongs to the neurotoxin 04 (omega-agtx) family. 01 (type I omega-agtx) subfamily. In terms of tissue distribution, expressed by the venom gland.

Its subcellular location is the secreted. Its function is as follows. Insecticidal to house crickets. It induces an excitatory slow-onset impact that leads to irreversible spastic paralysis. It also modifies human voltage-gated potassium channel Kv1.5/KCNA5. Most likely, it binds to the voltage-sensing domain of the channel, suggesting it does not block the pore but prevents its opening at physiological membrane potentials. The recombinant peptide binds to the channel in an irreversible manner and slows down the hKv1.5 current activation kinetics. It is not toxic to mice, when intracranially injected (at 0.5 ug/g mouse). This Lycosa singoriensis (Wolf spider) protein is U2-lycotoxin-Ls1d.